The sequence spans 488 residues: Splicing factor U2AF 65 kDa subunit (488 aa).

Composition is skewed to basic and acidic residues over residues 25 to 55 (LESL…DEDR) and 78 to 129 (DRRD…KYRF). The tract at residues 25–133 (LESLQEDVKP…PKKYRFWDVP (109 aa)) is disordered. RRM domains lie at 175 to 257 (RRLY…RPRD), 282 to 359 (NKIF…LACA), and 389 to 479 (EILC…YYDV).

This sequence belongs to the splicing factor SR family. As to quaternary structure, forms a heterodimer with the U2AF small subunit.

The protein localises to the nucleus. Functionally, necessary for the splicing of pre-mRNA. Binds to the polypyrimidine tract of introns early during spliceosome assembly. The polypeptide is Splicing factor U2AF 65 kDa subunit (uaf-1) (Caenorhabditis briggsae).